Reading from the N-terminus, the 475-residue chain is Doublecortin domain-containing protein 2 (475 aa).

2 Doublecortin domains span residues 17–100 (KSVL…LNYL) and 139–221 (CTIF…LPYS). Residues 234–475 (YGQKASSLPP…ESNKASSAVA (242 aa)) form a disordered region. Positions 252–272 (GSGNYRQSKSTIGSSDNSSPQ) are enriched in polar residues. S270 is modified (phosphoserine). Basic and acidic residues predominate over residues 353–365 (EKTSKDANQKDDF). Over residues 407–419 (TDEENGEELDQVT) the composition is skewed to acidic residues. Polar residues predominate over residues 455–475 (TVTSPQENEGNESNKASSAVA).

Interacts with DVL1, DVL2 and DVL3. In terms of tissue distribution, expressed in hair cells of the inner ear.

The protein localises to the cell projection. The protein resides in the cilium. Its subcellular location is the cytoplasm. It localises to the cytoskeleton. It is found in the cilium axoneme. The protein localises to the kinocilium. Protein that plays a role in the inhibition of canonical Wnt signaling pathway. May be involved in neuronal migration during development of the cerebral neocortex. Involved in the control of ciliogenesis and ciliary length. This is Doublecortin domain-containing protein 2 (Dcdc2) from Rattus norvegicus (Rat).